Here is a 323-residue protein sequence, read N- to C-terminus: tRNA dimethylallyltransferase (323 aa).

Position 12–19 (12–19 (GPTAAGKT)) interacts with ATP. 14–19 (TAAGKT) contributes to the substrate binding site. Interaction with substrate tRNA regions lie at residues 37-40 (DSAL) and 161-165 (QRLMR).

It belongs to the IPP transferase family. In terms of assembly, monomer. Requires Mg(2+) as cofactor.

The catalysed reaction is adenosine(37) in tRNA + dimethylallyl diphosphate = N(6)-dimethylallyladenosine(37) in tRNA + diphosphate. In terms of biological role, catalyzes the transfer of a dimethylallyl group onto the adenine at position 37 in tRNAs that read codons beginning with uridine, leading to the formation of N6-(dimethylallyl)adenosine (i(6)A). The chain is tRNA dimethylallyltransferase from Pseudomonas aeruginosa (strain UCBPP-PA14).